We begin with the raw amino-acid sequence, 91 residues long: Tityustoxin-19 (91 aa).

The first 25 residues, 1 to 25 (MVATNRCCVFALLFALLLVHSLTEA), serve as a signal peptide directing secretion. The BetaSPN-type CS-alpha/beta domain maps to 58 to 91 (EYACPAIDKFCEDHCAAKKAVGKCDDFKCNCIKL). 3 disulfide bridges follow: Cys-61–Cys-81, Cys-68–Cys-86, and Cys-72–Cys-88.

It belongs to the long chain scorpion toxin family. Class 2 subfamily. In terms of tissue distribution, expressed by the venom gland.

The protein localises to the secreted. Functionally, may function as a voltage-gated potassium channel blocker and may have cytolytic activity. Is often not detected in the tested venom fractions, suggesting that the toxin is likely subject to frequent processing within the venom. Specific and reversible blocker of the potassium channel Kv1.2/KCNA2 (IC(50)=544 nM). Its function is as follows. Shows cytolytic effects on erythrocytes and induces non-selective pore formation when high concentrations (300 nM) are applied on oocytes. In terms of biological role, does not cause hemolysis, mast cell degranulation, LDH release, and does not have antimicrobial activity. Does not cause edema and pain. The sequence is that of Tityustoxin-19 from Tityus serrulatus (Brazilian scorpion).